The following is a 504-amino-acid chain: Arabinose import ATP-binding protein AraG (504 aa).

ABC transporter domains are found at residues Leu-8 to Arg-243 and Tyr-256 to Val-499. Gly-40–Ser-47 is a binding site for ATP.

This sequence belongs to the ABC transporter superfamily. Arabinose importer (TC 3.A.1.2.2) family. As to quaternary structure, the complex is composed of two ATP-binding proteins (AraG), two transmembrane proteins (AraH) and a solute-binding protein (AraF).

The protein localises to the cell inner membrane. The catalysed reaction is L-arabinose(out) + ATP + H2O = L-arabinose(in) + ADP + phosphate + H(+). In terms of biological role, part of the ABC transporter complex AraFGH involved in arabinose import. Responsible for energy coupling to the transport system. This is Arabinose import ATP-binding protein AraG from Shigella boydii serotype 4 (strain Sb227).